Consider the following 795-residue polypeptide: Phenylalanine--tRNA ligase beta subunit (795 aa).

The 110-residue stretch at 39-148 folds into the tRNA-binding domain; sequence AGTFNGVVVG…LDAPIGTDLR (110 aa). The B5 domain occupies 401–476; the sequence is PKVNTVQLRR…RIYGYNSIPN (76 aa). Mg(2+) contacts are provided by aspartate 454, aspartate 460, glutamate 463, and glutamate 464. Positions 701–794 constitute an FDX-ACB domain; it reads SKFPANRRDL…VKQRFNAELR (94 aa).

It belongs to the phenylalanyl-tRNA synthetase beta subunit family. Type 1 subfamily. As to quaternary structure, tetramer of two alpha and two beta subunits. Mg(2+) is required as a cofactor.

It is found in the cytoplasm. The catalysed reaction is tRNA(Phe) + L-phenylalanine + ATP = L-phenylalanyl-tRNA(Phe) + AMP + diphosphate + H(+). This chain is Phenylalanine--tRNA ligase beta subunit (pheT), found in Haemophilus influenzae (strain ATCC 51907 / DSM 11121 / KW20 / Rd).